The following is a 1172-amino-acid chain: DNA-directed RNA polymerase subunit beta (1172 aa).

It belongs to the RNA polymerase beta chain family. In terms of assembly, the RNAP catalytic core consists of 2 alpha, 1 beta, 1 beta' and 1 omega subunit. When a sigma factor is associated with the core the holoenzyme is formed, which can initiate transcription.

The enzyme catalyses RNA(n) + a ribonucleoside 5'-triphosphate = RNA(n+1) + diphosphate. In terms of biological role, DNA-dependent RNA polymerase catalyzes the transcription of DNA into RNA using the four ribonucleoside triphosphates as substrates. The polypeptide is DNA-directed RNA polymerase subunit beta (Mycobacterium sp. (strain JLS)).